Reading from the N-terminus, the 274-residue chain is Proteasome subunit beta (274 aa).

Residues 1-52 (MADPLGAAGRLPAVFMTPGTSSFADFLSRSAPHLLPGARSGLPGPVTEVAHG) constitute a propeptide, removed in mature form; by autocatalysis. Thr53 functions as the Nucleophile in the catalytic mechanism.

The protein belongs to the peptidase T1B family. As to quaternary structure, the 20S proteasome core is composed of 14 alpha and 14 beta subunits that assemble into four stacked heptameric rings, resulting in a barrel-shaped structure. The two inner rings, each composed of seven catalytic beta subunits, are sandwiched by two outer rings, each composed of seven alpha subunits. The catalytic chamber with the active sites is on the inside of the barrel. Has a gated structure, the ends of the cylinder being occluded by the N-termini of the alpha-subunits. Is capped by the proteasome-associated ATPase, ARC.

The protein localises to the cytoplasm. It catalyses the reaction Cleavage of peptide bonds with very broad specificity.. It participates in protein degradation; proteasomal Pup-dependent pathway. With respect to regulation, the formation of the proteasomal ATPase ARC-20S proteasome complex, likely via the docking of the C-termini of ARC into the intersubunit pockets in the alpha-rings, may trigger opening of the gate for substrate entry. Interconversion between the open-gate and close-gate conformations leads to a dynamic regulation of the 20S proteasome proteolysis activity. Functionally, component of the proteasome core, a large protease complex with broad specificity involved in protein degradation. This is Proteasome subunit beta from Frankia casuarinae (strain DSM 45818 / CECT 9043 / HFP020203 / CcI3).